The sequence spans 349 residues: Phenylalanine--tRNA ligase alpha subunit (349 aa).

Glu-258 contacts Mg(2+).

This sequence belongs to the class-II aminoacyl-tRNA synthetase family. Phe-tRNA synthetase alpha subunit type 1 subfamily. Tetramer of two alpha and two beta subunits. The cofactor is Mg(2+).

The protein resides in the cytoplasm. The catalysed reaction is tRNA(Phe) + L-phenylalanine + ATP = L-phenylalanyl-tRNA(Phe) + AMP + diphosphate + H(+). This is Phenylalanine--tRNA ligase alpha subunit from Rickettsia rickettsii (strain Sheila Smith).